The primary structure comprises 72 residues: UPF0270 protein Ent638_3781 (72 aa).

Belongs to the UPF0270 family.

The protein is UPF0270 protein Ent638_3781 of Enterobacter sp. (strain 638).